The sequence spans 471 residues: Ribulose bisphosphate carboxylase large chain (471 aa).

Lys-5 bears the N6,N6,N6-trimethyllysine mark. Substrate is bound by residues Asn-114 and Thr-164. The active-site Proton acceptor is the Lys-166. Residue Lys-168 coordinates substrate. Mg(2+) is bound by residues Lys-192, Asp-194, and Glu-195. At Lys-192 the chain carries N6-carboxylysine. His-285 functions as the Proton acceptor in the catalytic mechanism. Arg-286, His-318, and Ser-370 together coordinate substrate.

It belongs to the RuBisCO large chain family. Type I subfamily. In terms of assembly, heterohexadecamer of 8 large chains and 8 small chains; disulfide-linked. The disulfide link is formed within the large subunit homodimers. Requires Mg(2+) as cofactor. In terms of processing, the disulfide bond which can form in the large chain dimeric partners within the hexadecamer appears to be associated with oxidative stress and protein turnover.

It localises to the plastid. The protein resides in the chloroplast. It carries out the reaction 2 (2R)-3-phosphoglycerate + 2 H(+) = D-ribulose 1,5-bisphosphate + CO2 + H2O. The catalysed reaction is D-ribulose 1,5-bisphosphate + O2 = 2-phosphoglycolate + (2R)-3-phosphoglycerate + 2 H(+). Functionally, ruBisCO catalyzes two reactions: the carboxylation of D-ribulose 1,5-bisphosphate, the primary event in carbon dioxide fixation, as well as the oxidative fragmentation of the pentose substrate in the photorespiration process. Both reactions occur simultaneously and in competition at the same active site. This chain is Ribulose bisphosphate carboxylase large chain, found in Chiococca alba (West Indian milkberry).